Consider the following 544-residue polypeptide: Potential vesicular glutamate transporter vglu-3 (544 aa).

At 1-49 (MPNGSIRNCANAVADTVRQTFSRKTWEHKEQLQTITEQKKFFLRKVRWQ) the chain is on the cytoplasmic side. Residues 50 to 70 (IAILAHFGFAISFGIRSNFGV) traverse the membrane as a helical segment. Over 71–104 (AKNRMVNNFTDAYGEVHEREFLWTGAEVGMMESS) the chain is Extracellular. N-linked (GlcNAc...) asparagine glycosylation occurs at asparagine 78. Residues 105 to 125 (FFYGYAASQIPAGVLAAKFAP) form a helical membrane-spanning segment. Over 126 to 127 (NK) the chain is Cytoplasmic. The helical transmembrane segment at 128–148 (IFMLGILVASFMNILSAISFN) threads the bilayer. The Extracellular segment spans residues 149-154 (FHPYTD). A helical transmembrane segment spans residues 155–175 (IFVMVVQAVQGLALGVLYPAM). Residues 176–193 (HGVWKFWAPPLERSKLAT) lie on the Cytoplasmic side of the membrane. The helical transmembrane segment at 194 to 214 (TAFTGSSVGVMTGLPASAYLV) threads the bilayer. At 215–219 (SHFSW) the chain is on the extracellular side. Residues 220-240 (STPFYVFGVVGIIWSLIWMYV) form a helical membrane-spanning segment. The Cytoplasmic portion of the chain corresponds to 241–285 (SSHSPETHGYISDDEKKQVTEKIGDVAVKNMSLTTLPWRDMMTSS). Residues 286-306 (AVWAIIICTFCRSWGFFLLLG) form a helical membrane-spanning segment. At 307–323 (NQLTYMKDVLHIDIKNS) the chain is on the extracellular side. The helical transmembrane segment at 324–344 (GFISIFPQFGMCIVTLATGQL) threads the bilayer. The Cytoplasmic portion of the chain corresponds to 345 to 360 (CDYLRSSGKMSTEAVR). Residues 361-381 (KSVNTFGFTVEAMMLGCLAFV) traverse the membrane as a helical segment. At 382 to 384 (RDP) the chain is on the extracellular side. Residues 385-405 (VIAVTCLVIACTGSGSVLSGF) traverse the membrane as a helical segment. Over 406–416 (NVNHFDIAPRY) the chain is Cytoplasmic. The helical transmembrane segment at 417 to 437 (APILMGIANGLGAVAGVGGMV) threads the bilayer. Residues 438–450 (TNTVTYQNPDGWK) are Extracellular-facing. Residues 451 to 471 (WVFLLAMAIDIFGVIFFLIFA) traverse the membrane as a helical segment. The Cytoplasmic segment spans residues 472–544 (KGDVLPWARE…APAEKSESSS (73 aa)). Residues 501–544 (SLSRKTRNREGDTSYEKMEEDSEMKPCSKKVEARAPAEKSESSS) form a disordered region. Residues 508-544 (NREGDTSYEKMEEDSEMKPCSKKVEARAPAEKSESSS) show a composition bias toward basic and acidic residues.

Belongs to the major facilitator superfamily. Sodium/anion cotransporter family. VGLUT subfamily.

It is found in the membrane. This is Potential vesicular glutamate transporter vglu-3 (vglu-3) from Caenorhabditis elegans.